The chain runs to 1508 residues: MSEKPFVDAPPPEDGVAHQVSPHDNGSLSEEANSINEYTGFGAHQEGEIRELARTFTNMSHDSGHDLSKTNTSQDLLKYLSHMSEVPGVEPFDPEQISEQLNPDSPNFNAKFWVKNMRKLFDSNPDYYKPSKLGLAYRNLRAYGVAADSDYQPTVSNGLWKMAVDYWHDMRKIDESRCFDILKTMDGYFKPGEVTVVLGRPGSGCSTLLKTIACNTYGFHIGEESQISYDGMTPDEIHKHHRGDVVYSAETDVHFPHLSVGDTLEFAAKLRTPQNRGEVSRLEHAKHMASVTMATYGLSHTRNTPVGNDFVRGVSGGERKRVSIAEVSLSGANIQCWDNATRGLDAATALEFIRALKTSAAILDATPLIAIYQCSQDAYDLFDNVIVLYEGYQIFFGKASEAKQFFLDMGYECPQRQTTADFLTSLTNPEERVVKPGFENKVPRTAKEFSDYWRNSSNYKVLTAGIDKYLAEVADGSQREAYRASHVAKQSDHTRPSSPYTVSFFMQTRYIIGRNFLRMKGDPSIVIFSIFGQGVMGLILSSVFYNLQPTTGSFYYRGAAMFFAVLFNAFASLLEIMSLFEARPIVEKHKKYALYRPSADALASIISELPVKLCMSTCFNFSFYFMVHFRRDPGRFFFYWLFCGLCTLCMSHMFRSLGAVSTSLAAAMTPATSVLLAMVIFTGFVIPIPSMLGWCRWIQYINPVSYVFESLMVNEFHGRKFECAQFVPSGGPYDQVAAVNRVCSTAGARPGEDFVDGTAYLQTSFEYVNAHKWRNLGIVVAYIVVFLGVYIALTEFNKGAMQKGEIALFLRGSLKKVRKQREQNEAKVNDVENNLPNEKISYSDAMEKDSGESSTSDDKLPNQRQIFHWKDLTYQVKIKAENRVILNHVDGWVKPGQITALMGASGAGKTTLLNCLSERLTTGTVTDGVRMVNGHGLDSSFQRSIGYVQQQDIHLATSTVREALTFSAYLRQPSHVSKKEKDEYVDYVIDLLEMGAYSDALVGVAGEGLNVEQRKRLTIGVELVAKPKLLLFLDEPTSGLDSQTAWSICKLMRKLANHGQAILCTIHQPSAILLQEFDRLLFLQKGGKTVYFGDLGKNCQGLIDYFEKHGAHPCPPDANPAEWMLEVVGAAPGSKAAQDYFEVWRNSEEYQEVQRELAYMENELGKLPVDEDPESRKKYATSLIKQYFIVTWRTFQQYWRSPGYIYSKFFLVITASLFNGFAFFHSGTSQQGLQNQMFSMFMFYMPLQTLIQQMLPYYVMQREIYEVREAPSRTFSWFAFIASQITTEIPFQVVLGTVAFFCWYYPVGLYQNATPTDTVHERGALMWLLVTAFYVYTISLGQMVVAFMEIADNAANMVNLMFIMCLNFCGVLATPEALPGFWIFMYRCNPFTYLIQAMLSTGLANTKIVCSSREILHFQPPSGQTCGQYMQQFISAAGGYLLDESATDQCDFCAMSQTNTFLDSVHAVYSERWRNFGIFIAFIAINMIGTIFFYWLARVPKSSKSKNH.

Residues 1–30 (MSEKPFVDAPPPEDGVAHQVSPHDNGSLSE) are disordered. Over 1–524 (MSEKPFVDAP…NFLRMKGDPS (524 aa)) the chain is Cytoplasmic. The 251-residue stretch at 165 to 415 (DYWHDMRKID…FLDMGYECPQ (251 aa)) folds into the ABC transporter 1 domain. Residues 525–545 (IVIFSIFGQGVMGLILSSVFY) traverse the membrane as a helical segment. Residues 546-559 (NLQPTTGSFYYRGA) lie on the Extracellular side of the membrane. Residues 560–580 (AMFFAVLFNAFASLLEIMSLF) traverse the membrane as a helical segment. Residues 581 to 608 (EARPIVEKHKKYALYRPSADALASIISE) are Cytoplasmic-facing. The chain crosses the membrane as a helical span at residues 609–629 (LPVKLCMSTCFNFSFYFMVHF). Residues 630–633 (RRDP) lie on the Extracellular side of the membrane. The helical transmembrane segment at 634–654 (GRFFFYWLFCGLCTLCMSHMF) threads the bilayer. Residues 655 to 673 (RSLGAVSTSLAAAMTPATS) lie on the Cytoplasmic side of the membrane. Residues 674–694 (VLLAMVIFTGFVIPIPSMLGW) form a helical membrane-spanning segment. Residues 695–775 (CRWIQYINPV…EYVNAHKWRN (81 aa)) are Extracellular-facing. Residues 776–796 (LGIVVAYIVVFLGVYIALTEF) form a helical membrane-spanning segment. Residues 797–1203 (NKGAMQKGEI…TFQQYWRSPG (407 aa)) lie on the Cytoplasmic side of the membrane. Positions 839–860 (KISYSDAMEKDSGESSTSDDKL) are disordered. Residues 845-860 (AMEKDSGESSTSDDKL) are compositionally biased toward basic and acidic residues. The 244-residue stretch at 867 to 1110 (FHWKDLTYQV…GLIDYFEKHG (244 aa)) folds into the ABC transporter 2 domain. 903–910 (GASGAGKT) provides a ligand contact to ATP. The chain crosses the membrane as a helical span at residues 1204–1224 (YIYSKFFLVITASLFNGFAFF). At 1225-1239 (HSGTSQQGLQNQMFS) the chain is on the extracellular side. Residues 1240–1260 (MFMFYMPLQTLIQQMLPYYVM) form a helical membrane-spanning segment. The Cytoplasmic segment spans residues 1261–1288 (QREIYEVREAPSRTFSWFAFIASQITTE). A helical membrane pass occupies residues 1289-1309 (IPFQVVLGTVAFFCWYYPVGL). Topologically, residues 1310-1326 (YQNATPTDTVHERGALM) are extracellular. A helical transmembrane segment spans residues 1327 to 1347 (WLLVTAFYVYTISLGQMVVAF). Residues 1348 to 1362 (MEIADNAANMVNLMF) are Cytoplasmic-facing. A helical transmembrane segment spans residues 1363-1383 (IMCLNFCGVLATPEALPGFWI). Topologically, residues 1384–1475 (FMYRCNPFTY…HAVYSERWRN (92 aa)) are extracellular. A helical transmembrane segment spans residues 1476 to 1496 (FGIFIAFIAINMIGTIFFYWL). Topologically, residues 1497 to 1508 (ARVPKSSKSKNH) are cytoplasmic.

Belongs to the ABC transporter superfamily.

The protein localises to the cell membrane. It carries out the reaction fluconazole(in) + ATP + H2O = fluconazole(out) + ADP + phosphate + H(+). It catalyses the reaction itraconazole(in) + ATP + H2O = itraconazole(out) + ADP + phosphate + H(+). The catalysed reaction is voriconazole(in) + ATP + H2O = voriconazole(out) + ADP + phosphate + H(+). The bis-benzodioxolylindolinone azoffluxin acts as an inhibitor of the transporter activity. Clorgyline analogs M19 and M25 inhibit the transcporter activity by uncoupling CDR1 ATPase activity from the active transport of substrates. Activity is also inhibited by beauvericin and oligomycin. Its function is as follows. Pleiotropic ABC efflux transporter that confers resistance to numerous chemicals including itraconazole, fluconazole, voriconazole and posaconazole. The protein is Pleiotropic ABC efflux transporter of multiple drugs CDR1 of Candidozyma auris (Yeast).